Here is a 278-residue protein sequence, read N- to C-terminus: Lectin 6 (278 aa).

The signal sequence occupies residues 1–23 (MTLSSALIKIFITFLFLQNHVNS). Residues Asn-116, Asn-139, and Asn-271 are each glycosylated (N-linked (GlcNAc...) asparagine).

The protein belongs to the leguminous lectin family.

May be involved in arbuscular mycorrhizal (AM) symbiosis with AM fungi. The chain is Lectin 6 from Medicago truncatula (Barrel medic).